The following is a 786-amino-acid chain: Endonuclease MutS2 (786 aa).

Residue 333-340 (GPNTGGKT) participates in ATP binding. One can recognise a Smr domain in the interval 711–786 (LDLRGERYDQ…GSGATIVNFK (76 aa)).

This sequence belongs to the DNA mismatch repair MutS family. MutS2 subfamily. In terms of assembly, homodimer. Binds to stalled ribosomes, contacting rRNA.

In terms of biological role, endonuclease that is involved in the suppression of homologous recombination and thus may have a key role in the control of bacterial genetic diversity. Its function is as follows. Acts as a ribosome collision sensor, splitting the ribosome into its 2 subunits. Detects stalled/collided 70S ribosomes which it binds and splits by an ATP-hydrolysis driven conformational change. Acts upstream of the ribosome quality control system (RQC), a ribosome-associated complex that mediates the extraction of incompletely synthesized nascent chains from stalled ribosomes and their subsequent degradation. Probably generates substrates for RQC. The chain is Endonuclease MutS2 from Lacticaseibacillus paracasei (strain ATCC 334 / BCRC 17002 / CCUG 31169 / CIP 107868 / KCTC 3260 / NRRL B-441) (Lactobacillus paracasei).